The chain runs to 116 residues: Large ribosomal subunit protein bL20 (116 aa).

It belongs to the bacterial ribosomal protein bL20 family.

Binds directly to 23S ribosomal RNA and is necessary for the in vitro assembly process of the 50S ribosomal subunit. It is not involved in the protein synthesizing functions of that subunit. The chain is Large ribosomal subunit protein bL20 from Desulfosudis oleivorans (strain DSM 6200 / JCM 39069 / Hxd3) (Desulfococcus oleovorans).